Reading from the N-terminus, the 207-residue chain is uncharacterized protein (207 aa).

It belongs to the flavoredoxin family. FMN serves as cofactor.

This is an uncharacterized protein from Bacillus subtilis (strain 168).